The chain runs to 187 residues: MNLKHHFLIAMPSIKNPLFRRSVVYIYQHSTEGAMGILINKPIHKYTIKNILNKLKINIEKNIDMDKLNHPVLFGGPLSDDRSFILHSPCYSFKSSVNISREITITTSNDIFNTIGTSSQPEKILVALGCSEWGKGQLEQEVIHNAWITTLANLKILFNTPIYDRWYESAKIIGIDIRNISSEIGHS.

Belongs to the UPF0301 (AlgH) family.

The sequence is that of UPF0301 protein WIGBR1650 from Wigglesworthia glossinidia brevipalpis.